We begin with the raw amino-acid sequence, 119 residues long: uncharacterized protein (119 aa).

The disordered stretch occupies residues 1-22; that stretch reads MQGQAGKRKTDGKVPSNTEQNC.

This is an uncharacterized protein from Saccharomyces cerevisiae (strain ATCC 204508 / S288c) (Baker's yeast).